Reading from the N-terminus, the 457-residue chain is C4-dicarboxylate transport protein (457 aa).

7 helical membrane-spanning segments follow: residues 20-42, 51-73, 88-110, 138-158, 166-188, 212-234, and 241-263; these read LYFQ…PAFA, AFIK…TGIA, AMAY…AHVV, LTLV…AFTG, LTGP…LALV, ILMR…KYGV, and AWLV…GLVS.

This sequence belongs to the dicarboxylate/amino acid:cation symporter (DAACS) (TC 2.A.23) family.

Its subcellular location is the cell inner membrane. Its function is as follows. Responsible for the transport of dicarboxylates such as succinate, fumarate, and malate from the periplasm across the membrane. The sequence is that of C4-dicarboxylate transport protein from Xanthomonas axonopodis pv. citri (strain 306).